Here is a 464-residue protein sequence, read N- to C-terminus: MVRTRFAPSPTGYMHLGNARTGIFSYLFARHHNGTFVLRIEDTDRERSTKEFEDSIIEDLKWLGIEWDEFYRQSERFDIYKEYAKKLIDSGHAYYCFCKEEDIEKQREEAYAQGKAYRYPGTCRHLSKEDVEDRLKSGESYVIRFKVPDGQIVSFEDMIRGNISINVDDFGDFVIVRSDGSSVYNFVAVIDDALMKITHVIRGEDHISNTPKQILIYEALGFKPPEFAHLPVILGEDRTKLSKRHGGVSVRFYKENGYCPEALFNYLCLLGWSSEKVGKEVISKEEAVKYFDIKDINLSPAVFSHDKLYWLNGVYIREILPEDRLLEDLLSFLEKAYGTVDIEYLKKIVKATRKEYNTYLEAVEKLRPFFKEKELDEVAKEELSKIDRKVFELLKQEIESLEEITPENLKGVVKNIQKSTSLKPKDVWHALRIALTGSLEGIAIDVIASILPKEEVLKRLSRYT.

The 'HIGH' region signature appears at 8–18; that stretch reads PSPTGYMHLGN. Positions 96, 98, 123, and 125 each coordinate Zn(2+). A 'KMSKS' region motif is present at residues 240 to 244; that stretch reads KLSKR. Lysine 243 contributes to the ATP binding site.

It belongs to the class-I aminoacyl-tRNA synthetase family. Glutamate--tRNA ligase type 1 subfamily. In terms of assembly, monomer. Zn(2+) is required as a cofactor.

The protein localises to the cytoplasm. The enzyme catalyses tRNA(Glu) + L-glutamate + ATP = L-glutamyl-tRNA(Glu) + AMP + diphosphate. Its function is as follows. Catalyzes the attachment of glutamate to tRNA(Glu) in a two-step reaction: glutamate is first activated by ATP to form Glu-AMP and then transferred to the acceptor end of tRNA(Glu). This is Glutamate--tRNA ligase from Hydrogenobaculum sp. (strain Y04AAS1).